Reading from the N-terminus, the 63-residue chain is Hyphancin-3D (63 aa).

The first 22 residues, 1–22, serve as a signal peptide directing secretion; the sequence is MNFSRIIFLVFACFVALASVSA. Residues 23–26 constitute a propeptide, removed by a dipeptidylpeptidase; sequence APEP. At Leu61 the chain carries Leucine amide.

Belongs to the cecropin family.

Its subcellular location is the secreted. Its function is as follows. Has antibacterial activity. In Hyphantria cunea (Fall webworm moth), this protein is Hyphancin-3D.